A 439-amino-acid polypeptide reads, in one-letter code: MFTPEQFTKVMSQLGNFSQLGQMFQPGNVAMLQALQANGASSTPSLFPAMPSVIPSLAAPSSPTTSNLTADQIVKTCEQLETDGDVDGLFRFMCTIPPQKTQEVAGNEAFLRARALVCFHASHFRELYAILENNKFSPKYHPKLQEMWHEAHYREQEKNRGKSLCAVDKYRVRKKYPMPRTIWDGEQKTHCFKERTRSLLREWYLKDPYPNPPKKKELANATGLTQMQVGNWFKNRRQRDRAAAAKNKQNIIGVELKKTSSDMSDSDDDFEDSMTDSPSPIDEPKDLSKSHIPKLSPTLLPKMATPFDMFAAAANPLMMLNLNPALYMQFHNFFNTMRNPQIDEEENSETTVEVEADIEPPKKRSKLSIDEILNIKSEVSPSQCSPCSNESLSPKRAVKTEEVKKEDDEAAEEDSRSVKSETSEDPKHSSPKSTTSQSE.

The homeobox DNA-binding region spans 183–243 (WDGEQKTHCF…KNRRQRDRAA (61 aa)). Disordered regions lie at residues 253-293 (GVEL…SHIP), 344-365 (EEEN…KKRS), and 379-439 (VSPS…SQSE). Composition is skewed to acidic residues over residues 264 to 274 (SDSDDDFEDSM) and 344 to 358 (EEEN…EADI). Polar residues predominate over residues 379–392 (VSPSQCSPCSNESL). Over residues 398-428 (VKTEEVKKEDDEAAEEDSRSVKSETSEDPKH) the composition is skewed to basic and acidic residues.

This sequence belongs to the SIX/Sine oculis homeobox family. As to quaternary structure, interacts with gmn-1. Expressed in the posterior gonad. Expressed in some cells in the head that are probably neurons. Expressed in the dorsal and ventral neuron RMD pair and the inner labial neuron class IL1. Not expressed in BAG neurons.

Its subcellular location is the nucleus. Functionally, transcription factor which binds a motif with the core sequence 5'-GTATCA-3'. Plays a role in head morphogenesis. Involved in embryonic development. Required for cell specification of the RIA interneurons. May cooperate with the transcription factor vab-3 and phosphatase eya-1 to repress transcription factor ets-5 expression in non BAG neuronal cells. The protein is Homeobox protein ceh-32 of Caenorhabditis elegans.